Here is a 360-residue protein sequence, read N- to C-terminus: Holliday junction branch migration complex subunit RuvB (360 aa).

A large ATPase domain (RuvB-L) region spans residues 4-196 (HEEDLDQAEE…FGFTAHLEFY (193 aa)). ATP is bound by residues Leu35, Arg36, Gly77, Lys80, Thr81, Thr82, 143 to 145 (EDF), Arg186, Tyr196, and Arg233. Thr81 contributes to the Mg(2+) binding site. The small ATPAse domain (RuvB-S) stretch occupies residues 197 to 267 (EPDELDLIVQ…VAQDALDLYE (71 aa)). Residues 270-360 (QLGLDRLDRG…PESDPPLFED (91 aa)) form a head domain (RuvB-H) region. Positions 306, 325, and 330 each coordinate DNA.

It belongs to the RuvB family. In terms of assembly, homohexamer. Forms an RuvA(8)-RuvB(12)-Holliday junction (HJ) complex. HJ DNA is sandwiched between 2 RuvA tetramers; dsDNA enters through RuvA and exits via RuvB. An RuvB hexamer assembles on each DNA strand where it exits the tetramer. Each RuvB hexamer is contacted by two RuvA subunits (via domain III) on 2 adjacent RuvB subunits; this complex drives branch migration. In the full resolvosome a probable DNA-RuvA(4)-RuvB(12)-RuvC(2) complex forms which resolves the HJ.

It is found in the cytoplasm. The enzyme catalyses ATP + H2O = ADP + phosphate + H(+). Its function is as follows. The RuvA-RuvB-RuvC complex processes Holliday junction (HJ) DNA during genetic recombination and DNA repair, while the RuvA-RuvB complex plays an important role in the rescue of blocked DNA replication forks via replication fork reversal (RFR). RuvA specifically binds to HJ cruciform DNA, conferring on it an open structure. The RuvB hexamer acts as an ATP-dependent pump, pulling dsDNA into and through the RuvAB complex. RuvB forms 2 homohexamers on either side of HJ DNA bound by 1 or 2 RuvA tetramers; 4 subunits per hexamer contact DNA at a time. Coordinated motions by a converter formed by DNA-disengaged RuvB subunits stimulates ATP hydrolysis and nucleotide exchange. Immobilization of the converter enables RuvB to convert the ATP-contained energy into a lever motion, pulling 2 nucleotides of DNA out of the RuvA tetramer per ATP hydrolyzed, thus driving DNA branch migration. The RuvB motors rotate together with the DNA substrate, which together with the progressing nucleotide cycle form the mechanistic basis for DNA recombination by continuous HJ branch migration. Branch migration allows RuvC to scan DNA until it finds its consensus sequence, where it cleaves and resolves cruciform DNA. In Nocardioides sp. (strain ATCC BAA-499 / JS614), this protein is Holliday junction branch migration complex subunit RuvB.